A 1198-amino-acid polypeptide reads, in one-letter code: Tetratricopeptide repeat protein 17 (1198 aa).

Residues Leu-313–Phe-346 form a TPR 1 repeat. The stretch at Cys-358–Lys-399 forms a coiled coil. TPR repeat units lie at residues Trp-630–Gln-663 and Pro-700–Cys-733. 2 disordered regions span residues Asp-771–Ser-792 and Asn-814–Asp-839. Positions Gly-821–Gly-832 are enriched in basic and acidic residues. TPR repeat units lie at residues Ser-1071–His-1105, Asp-1108–Phe-1141, and Val-1142–Phe-1175.

This sequence belongs to the TTC17 family.

The protein localises to the cytoplasm. It localises to the cell membrane. The protein resides in the cytoskeleton. In terms of biological role, plays a role in primary ciliogenesis by modulating actin polymerization. In Danio rerio (Zebrafish), this protein is Tetratricopeptide repeat protein 17 (ttc17).